The chain runs to 609 residues: MSALTTSQLATSATGFGIADRSAPSSLLRHGFQGLKPRSPAGGDATSLSVTTSARATPKQQRSVQRGSRRFPSVVVYATGAGMNVVFVGAEMAPWSKTGGLGDVLGGLPPAMAANGHRVMVISPRYDQYKDAWDTSVVAEIKVADRYERVRFFHCYKRGVDRVFIDHPSFLEKVWGKTGEKIYGPDTGVDYKDNQMRFSLLCQAALEAPRILNLNNNPYFKGTYGEDVVFVCNDWHTGPLASYLKNNYQPNGIYRNAKVAFCIHNISYQGRFAFEDYPELNLSERFRSSFDFIDGYDTPVEGRKINWMKAGILEADRVLTVSPYYAEELISGIARGCELDNIMRLTGITGIVNGMDVSEWDPSKDKYITAKYDATTAIEAKALNKEALQAEAGLPVDRKIPLIAFIGRLEEQKGPDVMAAAIPELMQEDVQIVLLGTGKKKFEKLLKSMEEKYPGKVRAVVKFNAPLAHLIMAGADVLAVPSRFEPCGLIQLQGMRYGTPCACASTGGLVDTVIEGKTGFHMGRLSVDCKVVEPSDVKKVAATLKRAIKVVGTPAYEEMVRNCMNQDLSWKGPAKNWENVLLGLGVAGSAPGIEGDEIAPLAKENVAAP.

The N-terminal 77 residues, 1-77 (MSALTTSQLA…SRRFPSVVVY (77 aa)), are a transit peptide targeting the chloroplast. Residues 29–67 (RHGFQGLKPRSPAGGDATSLSVTTSARATPKQQRSVQRG) are disordered. Residues 46–66 (TSLSVTTSARATPKQQRSVQR) are compositionally biased toward polar residues. Residue K97 participates in ADP-alpha-D-glucose binding. ADP contacts are provided by G100, R408, K413, K462, and Q493. Cysteines 337 and 529 form a disulfide.

The protein belongs to the glycosyltransferase 1 family. Bacterial/plant glycogen synthase subfamily.

It is found in the plastid. Its subcellular location is the chloroplast. The protein resides in the amyloplast. The enzyme catalyses an NDP-alpha-D-glucose + [(1-&gt;4)-alpha-D-glucosyl](n) = [(1-&gt;4)-alpha-D-glucosyl](n+1) + a ribonucleoside 5'-diphosphate + H(+). The protein operates within glycan biosynthesis; starch biosynthesis. In terms of biological role, required for the synthesis of amylose in endosperm. This Oryza sativa subsp. indica (Rice) protein is Granule-bound starch synthase 1, chloroplastic/amyloplastic (WAXY).